We begin with the raw amino-acid sequence, 304 residues long: Small ribosomal subunit biogenesis GTPase RsgA (304 aa).

Positions 78–237 (HSFLTRPPVA…VADTPGFNRP (160 aa)) constitute a CP-type G domain. Residues 127-130 (TKTD) and 179-187 (GPSGVGKSS) each bind GTP. 4 residues coordinate Zn(2+): cysteine 262, cysteine 267, histidine 269, and cysteine 275.

This sequence belongs to the TRAFAC class YlqF/YawG GTPase family. RsgA subfamily. In terms of assembly, monomer. Associates with 30S ribosomal subunit, binds 16S rRNA. Requires Zn(2+) as cofactor.

It is found in the cytoplasm. In terms of biological role, one of several proteins that assist in the late maturation steps of the functional core of the 30S ribosomal subunit. Helps release RbfA from mature subunits. May play a role in the assembly of ribosomal proteins into the subunit. Circularly permuted GTPase that catalyzes slow GTP hydrolysis, GTPase activity is stimulated by the 30S ribosomal subunit. The protein is Small ribosomal subunit biogenesis GTPase RsgA of Synechococcus sp. (strain CC9605).